Consider the following 407-residue polypeptide: Geranylgeranyl diphosphate reductase (407 aa).

Belongs to the geranylgeranyl reductase family. ChlP subfamily.

The enzyme catalyses phytyl diphosphate + 3 NADP(+) = geranylgeranyl diphosphate + 3 NADPH + 3 H(+). Its pathway is porphyrin-containing compound metabolism; chlorophyll biosynthesis. Catalyzes the stepwise hydrogenation of geranylgeraniol to phytol during chlorophyll A (ChlA) biosynthesis. The protein is Geranylgeranyl diphosphate reductase (chlP) of Synechocystis sp. (strain ATCC 27184 / PCC 6803 / Kazusa).